A 160-amino-acid chain; its full sequence is Ureidoglycolate lyase (160 aa).

The protein belongs to the ureidoglycolate lyase family. Homodimer. The cofactor is Ni(2+).

It catalyses the reaction (S)-ureidoglycolate = urea + glyoxylate. Its pathway is nitrogen metabolism; (S)-allantoin degradation. Its function is as follows. Catalyzes the catabolism of the allantoin degradation intermediate (S)-ureidoglycolate, generating urea and glyoxylate. Involved in the anaerobic utilization of allantoin as sole nitrogen source. Reinforces the induction of genes involved in the degradation of allantoin and glyoxylate by producing glyoxylate. This is Ureidoglycolate lyase from Escherichia coli (strain SMS-3-5 / SECEC).